Consider the following 266-residue polypeptide: Small ribosomal subunit protein uS3 (266 aa).

The KH type-2 domain maps to 39–107 (VREYLKKKLK…PVHVNIEEIR (69 aa)). The interval 214–266 (PVVEEVTEDKRPRRNARPGDRRPRRDGEGGAPGARRGGPRRGAGKPEDGKTGE) is disordered. Basic and acidic residues-rich tracts occupy residues 230–241 (RPGDRRPRRDGE) and 257–266 (GKPEDGKTGE).

It belongs to the universal ribosomal protein uS3 family. Part of the 30S ribosomal subunit. Forms a tight complex with proteins S10 and S14.

Functionally, binds the lower part of the 30S subunit head. Binds mRNA in the 70S ribosome, positioning it for translation. The polypeptide is Small ribosomal subunit protein uS3 (Burkholderia mallei (strain NCTC 10247)).